The chain runs to 116 residues: Ribonuclease P protein component (116 aa).

It belongs to the RnpA family. Consists of a catalytic RNA component (M1 or rnpB) and a protein subunit.

The catalysed reaction is Endonucleolytic cleavage of RNA, removing 5'-extranucleotides from tRNA precursor.. Its function is as follows. RNaseP catalyzes the removal of the 5'-leader sequence from pre-tRNA to produce the mature 5'-terminus. It can also cleave other RNA substrates such as 4.5S RNA. The protein component plays an auxiliary but essential role in vivo by binding to the 5'-leader sequence and broadening the substrate specificity of the ribozyme. The protein is Ribonuclease P protein component of Gluconacetobacter diazotrophicus (strain ATCC 49037 / DSM 5601 / CCUG 37298 / CIP 103539 / LMG 7603 / PAl5).